Here is an 88-residue protein sequence, read N- to C-terminus: Exodeoxyribonuclease 7 small subunit (88 aa).

Residues 68–88 form a disordered region; the sequence is SDPMHPDDGEPFDPSLVSTSQ.

The protein belongs to the XseB family. In terms of assembly, heterooligomer composed of large and small subunits.

It localises to the cytoplasm. It carries out the reaction Exonucleolytic cleavage in either 5'- to 3'- or 3'- to 5'-direction to yield nucleoside 5'-phosphates.. Functionally, bidirectionally degrades single-stranded DNA into large acid-insoluble oligonucleotides, which are then degraded further into small acid-soluble oligonucleotides. The polypeptide is Exodeoxyribonuclease 7 small subunit (Xylella fastidiosa (strain 9a5c)).